The following is a 131-amino-acid chain: Phosphoribosyl-ATP pyrophosphatase 2 (131 aa).

Positions 105 to 131 are disordered; it reads RIGKPAAPHATRRPVIPQEARAVRKHR.

The protein belongs to the PRA-PH family.

It localises to the cytoplasm. It carries out the reaction 1-(5-phospho-beta-D-ribosyl)-ATP + H2O = 1-(5-phospho-beta-D-ribosyl)-5'-AMP + diphosphate + H(+). It functions in the pathway amino-acid biosynthesis; L-histidine biosynthesis; L-histidine from 5-phospho-alpha-D-ribose 1-diphosphate: step 2/9. In Rhodopseudomonas palustris (strain ATCC BAA-98 / CGA009), this protein is Phosphoribosyl-ATP pyrophosphatase 2 (hisE2).